The chain runs to 321 residues: D-alanine--D-alanine ligase (321 aa).

Residues 121-315 (RIWFLTNNIN…FTNLIEEIIK (195 aa)) form the ATP-grasp domain. Residue 147–199 (PMKRPYVIKPLTQGSSIGVEVIFAEDDFNFADYDFPYGDQVIIEQYIKGRELQ) participates in ATP binding. Residues Glu268, Glu282, and Asn284 each contribute to the Mg(2+) site.

Belongs to the D-alanine--D-alanine ligase family. Mg(2+) is required as a cofactor. Requires Mn(2+) as cofactor.

It localises to the cytoplasm. The catalysed reaction is 2 D-alanine + ATP = D-alanyl-D-alanine + ADP + phosphate + H(+). Its pathway is cell wall biogenesis; peptidoglycan biosynthesis. Cell wall formation. This chain is D-alanine--D-alanine ligase, found in Rickettsia rickettsii (strain Iowa).